The sequence spans 604 residues: Polycomb group protein EMF2B (604 aa).

The C2H2-type zinc-finger motif lies at cysteine 310–histidine 331. A disordered region spans residues proline 396–leucine 440. The tract at residues leucine 454–threonine 589 is VEFS-box.

It belongs to the VEFS (VRN2-EMF2-FIS2-SU(Z)12) family. Component of the polycomb repressive complex 2 (PRC2), composed of the core PRC2 components FIE2, EZ1 and CLF. PRC2 methylates 'Lys-27' residues of histone H3 (H3K27me3), leading to transcriptional repression of the affected target gene. In terms of tissue distribution, widely expressed.

Polycomb group (PcG) protein. PcG proteins act by forming multiprotein complexes, which are required to maintain the transcriptionally repressive state of homeotic genes throughout development. PcG proteins are not required to initiate repression, but to maintain it during later stages of development. They act via the methylation of histones, rendering chromatin heritably changed in its expressibility. Polycomb group (PcG) protein involved in the repression of flowering under long day (LD) conditions. Regulates floret development. This is Polycomb group protein EMF2B from Oryza sativa subsp. japonica (Rice).